Consider the following 379-residue polypeptide: Dual-specificity RNA methyltransferase RlmN (379 aa).

The active-site Proton acceptor is glutamate 90. Residues 96–348 (EPSRGTLCVS…TTVRKTRGDD (253 aa)) enclose the Radical SAM core domain. A disulfide bond links cysteine 103 and cysteine 353. The [4Fe-4S] cluster site is built by cysteine 110, cysteine 114, and cysteine 117. S-adenosyl-L-methionine contacts are provided by residues 179 to 180 (GE), serine 211, 233 to 235 (SLH), and asparagine 310. Residue cysteine 353 is the S-methylcysteine intermediate of the active site.

It belongs to the radical SAM superfamily. RlmN family. [4Fe-4S] cluster is required as a cofactor.

It localises to the cytoplasm. The catalysed reaction is adenosine(2503) in 23S rRNA + 2 reduced [2Fe-2S]-[ferredoxin] + 2 S-adenosyl-L-methionine = 2-methyladenosine(2503) in 23S rRNA + 5'-deoxyadenosine + L-methionine + 2 oxidized [2Fe-2S]-[ferredoxin] + S-adenosyl-L-homocysteine. The enzyme catalyses adenosine(37) in tRNA + 2 reduced [2Fe-2S]-[ferredoxin] + 2 S-adenosyl-L-methionine = 2-methyladenosine(37) in tRNA + 5'-deoxyadenosine + L-methionine + 2 oxidized [2Fe-2S]-[ferredoxin] + S-adenosyl-L-homocysteine. In terms of biological role, specifically methylates position 2 of adenine 2503 in 23S rRNA and position 2 of adenine 37 in tRNAs. m2A2503 modification seems to play a crucial role in the proofreading step occurring at the peptidyl transferase center and thus would serve to optimize ribosomal fidelity. The protein is Dual-specificity RNA methyltransferase RlmN of Nitrosomonas europaea (strain ATCC 19718 / CIP 103999 / KCTC 2705 / NBRC 14298).